A 228-amino-acid chain; its full sequence is ATP-dependent dethiobiotin synthetase BioD (228 aa).

12–17 (EIGKTT) contributes to the ATP binding site. A Mg(2+)-binding site is contributed by Thr16. The active site involves Lys37. Ser41 contacts substrate. ATP is bound by residues Asp54, 116–119 (EGAG), and 205–207 (PRL). 2 residues coordinate Mg(2+): Asp54 and Glu116.

The protein belongs to the dethiobiotin synthetase family. As to quaternary structure, homodimer. Mg(2+) serves as cofactor.

It is found in the cytoplasm. It catalyses the reaction (7R,8S)-7,8-diammoniononanoate + CO2 + ATP = (4R,5S)-dethiobiotin + ADP + phosphate + 3 H(+). Its pathway is cofactor biosynthesis; biotin biosynthesis; biotin from 7,8-diaminononanoate: step 1/2. Its function is as follows. Catalyzes a mechanistically unusual reaction, the ATP-dependent insertion of CO2 between the N7 and N8 nitrogen atoms of 7,8-diaminopelargonic acid (DAPA, also called 7,8-diammoniononanoate) to form a ureido ring. In Pseudomonas aeruginosa (strain ATCC 15692 / DSM 22644 / CIP 104116 / JCM 14847 / LMG 12228 / 1C / PRS 101 / PAO1), this protein is ATP-dependent dethiobiotin synthetase BioD.